The primary structure comprises 317 residues: Methionyl-tRNA formyltransferase (317 aa).

110 to 113 contributes to the (6S)-5,6,7,8-tetrahydrofolate binding site; the sequence is SLLP.

The protein belongs to the Fmt family.

It catalyses the reaction L-methionyl-tRNA(fMet) + (6R)-10-formyltetrahydrofolate = N-formyl-L-methionyl-tRNA(fMet) + (6S)-5,6,7,8-tetrahydrofolate + H(+). In terms of biological role, attaches a formyl group to the free amino group of methionyl-tRNA(fMet). The formyl group appears to play a dual role in the initiator identity of N-formylmethionyl-tRNA by promoting its recognition by IF2 and preventing the misappropriation of this tRNA by the elongation apparatus. This chain is Methionyl-tRNA formyltransferase, found in Bacillus pumilus (strain SAFR-032).